We begin with the raw amino-acid sequence, 66 residues long: Holin (66 aa).

The Cytoplasmic segment spans residues 1–29; sequence MMLDTATEAGKGTLAVTGVGIAVYSPYEI. A helical; Signal-anchor for type II membrane protein transmembrane segment spans residues 30–50; sequence ASLCAAVLTALYVGAQLITLL. Residues 51 to 66 are Periplasmic-facing; the sequence is PKMLDSIAELRRRFKK.

Homomultimer.

It is found in the host cell inner membrane. Accumulates harmlessly in the cytoplasmic membrane until it reaches a critical concentration that triggers the formation of nanometer-scale pores (pinholes) causing host cell membrane depolarization and endolysin refolding and release into the periplasmic space. Once the pinholin has permeabilized the host cell membrane, the SAR-endolysin is released into the periplasm and breaks down the peptidoglycan layer. Determines the precise timing of host cell lysis. Participates with the SAR-endolysin and the U-spanin protein in the sequential events which lead to the programmed host cell lysis releasing the mature viral particles from the host cell. The protein is Holin of Pseudomonas phage phiKMV.